A 309-amino-acid polypeptide reads, in one-letter code: Tagatose-6-phosphate kinase (309 aa).

This sequence belongs to the carbohydrate kinase PfkB family. LacC subfamily.

The catalysed reaction is D-tagatofuranose 6-phosphate + ATP = D-tagatofuranose 1,6-bisphosphate + ADP + H(+). The protein operates within carbohydrate metabolism; D-tagatose 6-phosphate degradation; D-glyceraldehyde 3-phosphate and glycerone phosphate from D-tagatose 6-phosphate: step 1/2. In Streptococcus pyogenes serotype M28 (strain MGAS6180), this protein is Tagatose-6-phosphate kinase.